Consider the following 264-residue polypeptide: Thymidylate synthase (264 aa).

Arg21 contacts dUMP. His51 provides a ligand contact to (6R)-5,10-methylene-5,6,7,8-tetrahydrofolate. 126 to 127 serves as a coordination point for dUMP; it reads RR. Cys146 (nucleophile) is an active-site residue. DUMP contacts are provided by residues 166 to 169, Asn177, and 207 to 209; these read RSAD and HLY. A (6R)-5,10-methylene-5,6,7,8-tetrahydrofolate-binding site is contributed by Asp169. Ser263 contacts (6R)-5,10-methylene-5,6,7,8-tetrahydrofolate.

Belongs to the thymidylate synthase family. Bacterial-type ThyA subfamily. In terms of assembly, homodimer.

The protein resides in the cytoplasm. It carries out the reaction dUMP + (6R)-5,10-methylene-5,6,7,8-tetrahydrofolate = 7,8-dihydrofolate + dTMP. The protein operates within pyrimidine metabolism; dTTP biosynthesis. Catalyzes the reductive methylation of 2'-deoxyuridine-5'-monophosphate (dUMP) to 2'-deoxythymidine-5'-monophosphate (dTMP) while utilizing 5,10-methylenetetrahydrofolate (mTHF) as the methyl donor and reductant in the reaction, yielding dihydrofolate (DHF) as a by-product. This enzymatic reaction provides an intracellular de novo source of dTMP, an essential precursor for DNA biosynthesis. The polypeptide is Thymidylate synthase (Neisseria meningitidis serogroup A / serotype 4A (strain DSM 15465 / Z2491)).